The primary structure comprises 215 residues: Adenylate kinase (215 aa).

ATP is bound at residue 10–15 (GAGKGT). The tract at residues 30-59 (STGDMLRAAVKAGSPLGQQVKGVMDSGGLV) is NMP. Residues T31, R36, 57–59 (GLV), 85–88 (GFPR), and Q92 each bind AMP. The tract at residues 122–159 (GRRVHPASGRVYHTEHNPPKVAGKDDVTGEDLIQREDD) is LID. Residues R123 and 132–133 (VY) contribute to the ATP site. Residues R156 and R167 each coordinate AMP. Residue G201 participates in ATP binding.

This sequence belongs to the adenylate kinase family. Monomer.

Its subcellular location is the cytoplasm. The enzyme catalyses AMP + ATP = 2 ADP. Its pathway is purine metabolism; AMP biosynthesis via salvage pathway; AMP from ADP: step 1/1. Its function is as follows. Catalyzes the reversible transfer of the terminal phosphate group between ATP and AMP. Plays an important role in cellular energy homeostasis and in adenine nucleotide metabolism. The polypeptide is Adenylate kinase (Pseudomonas paraeruginosa (strain DSM 24068 / PA7) (Pseudomonas aeruginosa (strain PA7))).